Reading from the N-terminus, the 539-residue chain is Phosphoenolpyruvate carboxykinase (ATP) (539 aa).

Residues Arg64, Tyr206, and Lys212 each contribute to the substrate site. ATP-binding positions include Lys212, His231, and 247–255 (GLSGTGKTT). Mn(2+) contacts are provided by Lys212 and His231. Asp268 lines the Mn(2+) pocket. ATP is bound by residues Glu296, Arg332, 448-449 (RI), and Thr454. Arg332 lines the substrate pocket.

Belongs to the phosphoenolpyruvate carboxykinase (ATP) family. Monomer. It depends on Mn(2+) as a cofactor.

The protein localises to the cytoplasm. It catalyses the reaction oxaloacetate + ATP = phosphoenolpyruvate + ADP + CO2. It participates in carbohydrate biosynthesis; gluconeogenesis. Functionally, involved in the gluconeogenesis. Catalyzes the conversion of oxaloacetate (OAA) to phosphoenolpyruvate (PEP) through direct phosphoryl transfer between the nucleoside triphosphate and OAA. In Salmonella agona (strain SL483), this protein is Phosphoenolpyruvate carboxykinase (ATP).